Here is a 374-residue protein sequence, read N- to C-terminus: Chaperone protein DnaJ (374 aa).

Residues 5–70 (DYYEVLGVER…NKRAAYDQYG (66 aa)) enclose the J domain. The segment at 133–211 (GTSVNIRVPT…CHGEGRVEEY (79 aa)) adopts a CR-type zinc-finger fold. Cysteine 146, cysteine 149, cysteine 163, cysteine 166, cysteine 185, cysteine 188, cysteine 199, and cysteine 202 together coordinate Zn(2+). 4 CXXCXGXG motif repeats span residues 146 to 153 (CKPCDGSG), 163 to 170 (CPTCGGIG), 185 to 192 (CPRCHGQG), and 199 to 206 (CDSCHGEG).

It belongs to the DnaJ family. Homodimer. Zn(2+) is required as a cofactor.

It localises to the cytoplasm. Participates actively in the response to hyperosmotic and heat shock by preventing the aggregation of stress-denatured proteins and by disaggregating proteins, also in an autonomous, DnaK-independent fashion. Unfolded proteins bind initially to DnaJ; upon interaction with the DnaJ-bound protein, DnaK hydrolyzes its bound ATP, resulting in the formation of a stable complex. GrpE releases ADP from DnaK; ATP binding to DnaK triggers the release of the substrate protein, thus completing the reaction cycle. Several rounds of ATP-dependent interactions between DnaJ, DnaK and GrpE are required for fully efficient folding. Also involved, together with DnaK and GrpE, in the DNA replication of plasmids through activation of initiation proteins. This chain is Chaperone protein DnaJ, found in Pseudomonas fluorescens (strain SBW25).